A 505-amino-acid chain; its full sequence is Maturase K (505 aa).

This sequence belongs to the intron maturase 2 family. MatK subfamily.

It is found in the plastid. The protein resides in the chloroplast. Usually encoded in the trnK tRNA gene intron. Probably assists in splicing its own and other chloroplast group II introns. The protein is Maturase K of Morus alba (White mulberry).